A 406-amino-acid chain; its full sequence is MSDVNKVVLAYSGGLDTSVILKWLQDTYQCEVVTFTADIGQGEELEPAREKARQFGVKEIYIDDLREEFVRDFVFPMFRANTVYEGEYLLGTSIARPLIAKRLIEIAQETNADAVSHGATGKGNDQVRFELGAYALNPNIKIIAPWREWDLLSREKLLAYAEKHGIPVEMKHRQGGSPYSMDANLLHISYEGRHLENPAAEAEEDMWRWTVSPERAPDEAEYLEIEYRNGDPISLNGKTLKPHELLAELNRLGGKHGIGRLDLVENRYVGMKSRGCYETPGGTILLKAHRAIESITLDREVAHLKDDLMPRYASMIYNGYWWSPERLALQALIDHTQQTVNGWVKLKLYKGNVIVTGRDSGTDSLFDPNIATFEDDAGAYDHRDAGGFIKLNALRLRIAANLRNKK.

ATP contacts are provided by residues 10 to 18 (AYSGGLDTS) and alanine 37. The L-citrulline site is built by tyrosine 88 and serine 93. Glycine 118 lines the ATP pocket. L-aspartate-binding residues include threonine 120, asparagine 124, and aspartate 125. Asparagine 124 contacts L-citrulline. L-citrulline-binding residues include arginine 128, serine 180, serine 189, glutamate 265, and tyrosine 277.

This sequence belongs to the argininosuccinate synthase family. Type 1 subfamily. In terms of assembly, homotetramer.

Its subcellular location is the cytoplasm. The enzyme catalyses L-citrulline + L-aspartate + ATP = 2-(N(omega)-L-arginino)succinate + AMP + diphosphate + H(+). It participates in amino-acid biosynthesis; L-arginine biosynthesis; L-arginine from L-ornithine and carbamoyl phosphate: step 2/3. The sequence is that of Argininosuccinate synthase from Methylobacillus flagellatus (strain ATCC 51484 / DSM 6875 / VKM B-1610 / KT).